We begin with the raw amino-acid sequence, 343 residues long: uncharacterized protein (343 aa).

2 disordered regions span residues 1–27 (MIRE…ERMT) and 205–247 (SGGL…SKRQ). Over residues 16-27 (RARDSRAQERMT) the composition is skewed to basic and acidic residues. The segment covering 219–228 (GQDDGNTDDG) has biased composition (acidic residues). The segment covering 229 to 247 (NDVHQKGRGEVESKTSKRQ) has biased composition (basic and acidic residues).

Its function is as follows. Dispensable for normal development and fertility. This is an uncharacterized protein from Bos taurus (Bovine).